A 665-amino-acid chain; its full sequence is Potassium-transporting ATPase ATP-binding subunit (665 aa).

The next 4 membrane-spanning stretches (helical) occupy residues 28 to 48, 56 to 76, 207 to 227, and 244 to 264; these read MFLT…PGFF, YLQF…FSSM, IALT…TASI, and IVLL…AIGI. D295 serves as the catalytic 4-aspartylphosphate intermediate. ATP-binding positions include D332, E336, 364 to 371, and K382; that span reads FSSETKYS. Positions 501 and 505 each coordinate Mg(2+). 3 consecutive transmembrane segments (helical) span residues 570 to 590, 596 to 616, and 644 to 664; these read YFVI…VNVL, IVAV…LIPL, and VVVP…LGVV.

The protein belongs to the cation transport ATPase (P-type) (TC 3.A.3) family. Type IA subfamily. The system is composed of three essential subunits: KdpA, KdpB and KdpC.

The protein resides in the cell membrane. It carries out the reaction K(+)(out) + ATP + H2O = K(+)(in) + ADP + phosphate + H(+). Part of the high-affinity ATP-driven potassium transport (or Kdp) system, which catalyzes the hydrolysis of ATP coupled with the electrogenic transport of potassium into the cytoplasm. This subunit is responsible for energy coupling to the transport system and for the release of the potassium ions to the cytoplasm. This chain is Potassium-transporting ATPase ATP-binding subunit, found in Thermoplasma acidophilum (strain ATCC 25905 / DSM 1728 / JCM 9062 / NBRC 15155 / AMRC-C165).